We begin with the raw amino-acid sequence, 282 residues long: Bis(5'-nucleosyl)-tetraphosphatase, symmetrical (282 aa).

This sequence belongs to the Ap4A hydrolase family.

It carries out the reaction P(1),P(4)-bis(5'-adenosyl) tetraphosphate + H2O = 2 ADP + 2 H(+). Functionally, hydrolyzes diadenosine 5',5'''-P1,P4-tetraphosphate to yield ADP. This is Bis(5'-nucleosyl)-tetraphosphatase, symmetrical from Salmonella paratyphi C (strain RKS4594).